The sequence spans 104 residues: Cell division protein FtsL (104 aa).

The Cytoplasmic segment spans residues 1 to 20; it reads MSKPSLTLPRIVLHDLWQHK. Residues 21-43 form a helical membrane-spanning segment; it reads WILLLALLVLSNAVAVVYTSHVS. Topologically, residues 44 to 104 are periplasmic; sequence RKLTTEWDQL…PSEEIVVKVP (61 aa).

It belongs to the FtsL family. As to quaternary structure, part of a complex composed of FtsB, FtsL and FtsQ.

Its subcellular location is the cell inner membrane. Its function is as follows. Essential cell division protein. May link together the upstream cell division proteins, which are predominantly cytoplasmic, with the downstream cell division proteins, which are predominantly periplasmic. This Shewanella oneidensis (strain ATCC 700550 / JCM 31522 / CIP 106686 / LMG 19005 / NCIMB 14063 / MR-1) protein is Cell division protein FtsL.